A 263-amino-acid polypeptide reads, in one-letter code: Tryptophan synthase alpha chain (263 aa).

Residues Glu-49 and Asp-60 each act as proton acceptor in the active site.

It belongs to the TrpA family. In terms of assembly, tetramer of two alpha and two beta chains.

It catalyses the reaction (1S,2R)-1-C-(indol-3-yl)glycerol 3-phosphate + L-serine = D-glyceraldehyde 3-phosphate + L-tryptophan + H2O. Its pathway is amino-acid biosynthesis; L-tryptophan biosynthesis; L-tryptophan from chorismate: step 5/5. Functionally, the alpha subunit is responsible for the aldol cleavage of indoleglycerol phosphate to indole and glyceraldehyde 3-phosphate. This is Tryptophan synthase alpha chain from Cereibacter sphaeroides (strain ATCC 17029 / ATH 2.4.9) (Rhodobacter sphaeroides).